A 260-amino-acid chain; its full sequence is 1-(5-phosphoribosyl)-5-[(5-phosphoribosylamino)methylideneamino] imidazole-4-carboxamide isomerase (260 aa).

The active-site Proton acceptor is Asp-8. Catalysis depends on Asp-130, which acts as the Proton donor.

This sequence belongs to the HisA/HisF family.

The protein localises to the cytoplasm. It carries out the reaction 1-(5-phospho-beta-D-ribosyl)-5-[(5-phospho-beta-D-ribosylamino)methylideneamino]imidazole-4-carboxamide = 5-[(5-phospho-1-deoxy-D-ribulos-1-ylimino)methylamino]-1-(5-phospho-beta-D-ribosyl)imidazole-4-carboxamide. Its pathway is amino-acid biosynthesis; L-histidine biosynthesis; L-histidine from 5-phospho-alpha-D-ribose 1-diphosphate: step 4/9. The polypeptide is 1-(5-phosphoribosyl)-5-[(5-phosphoribosylamino)methylideneamino] imidazole-4-carboxamide isomerase (Chlorobaculum parvum (strain DSM 263 / NCIMB 8327) (Chlorobium vibrioforme subsp. thiosulfatophilum)).